Here is a 428-residue protein sequence, read N- to C-terminus: Adenylosuccinate synthetase (428 aa).

GTP-binding positions include G12 to K18 and G40 to T42. D13 serves as the catalytic Proton acceptor. Residues D13 and G40 each coordinate Mg(2+). IMP-binding positions include D13–K16, N38–H41, T128, R142, Q223, T238, and R302. Catalysis depends on H41, which acts as the Proton donor. Position 298 to 304 (V298 to R304) interacts with substrate. GTP is bound by residues R304, K330–D332, and G412–G414.

The protein belongs to the adenylosuccinate synthetase family. Homodimer. Mg(2+) serves as cofactor.

It localises to the cytoplasm. The enzyme catalyses IMP + L-aspartate + GTP = N(6)-(1,2-dicarboxyethyl)-AMP + GDP + phosphate + 2 H(+). It functions in the pathway purine metabolism; AMP biosynthesis via de novo pathway; AMP from IMP: step 1/2. Its function is as follows. Plays an important role in the de novo pathway of purine nucleotide biosynthesis. Catalyzes the first committed step in the biosynthesis of AMP from IMP. This is Adenylosuccinate synthetase from Cutibacterium acnes (strain DSM 16379 / KPA171202) (Propionibacterium acnes).